Here is a 493-residue protein sequence, read N- to C-terminus: Cobyric acid synthase (493 aa).

The 195-residue stretch at 246–440 (PIDIAVIKMP…IHGVFDGIVF (195 aa)) folds into the GATase cobBQ-type domain. Cys-326 acts as the Nucleophile in catalysis. His-432 is an active-site residue.

This sequence belongs to the CobB/CobQ family. CobQ subfamily.

Its pathway is cofactor biosynthesis; adenosylcobalamin biosynthesis. Its function is as follows. Catalyzes amidations at positions B, D, E, and G on adenosylcobyrinic A,C-diamide. NH(2) groups are provided by glutamine, and one molecule of ATP is hydrogenolyzed for each amidation. The chain is Cobyric acid synthase from Clostridium botulinum (strain 657 / Type Ba4).